Consider the following 391-residue polypeptide: S-adenosylmethionine synthase (391 aa).

Histidine 14 lines the ATP pocket. Position 16 (aspartate 16) interacts with Mg(2+). Glutamate 42 lines the K(+) pocket. Residues glutamate 55 and glutamine 98 each contribute to the L-methionine site. The tract at residues 98 to 108 (QSVDIAMGVDE) is flexible loop. ATP-binding positions include 172-174 (DGK), 238-239 (RF), aspartate 247, 253-254 (RK), alanine 270, and lysine 274. Aspartate 247 lines the L-methionine pocket. Lysine 278 is an L-methionine binding site.

Belongs to the AdoMet synthase family. Homotetramer; dimer of dimers. Requires Mg(2+) as cofactor. The cofactor is K(+).

It is found in the cytoplasm. It carries out the reaction L-methionine + ATP + H2O = S-adenosyl-L-methionine + phosphate + diphosphate. It participates in amino-acid biosynthesis; S-adenosyl-L-methionine biosynthesis; S-adenosyl-L-methionine from L-methionine: step 1/1. Its function is as follows. Catalyzes the formation of S-adenosylmethionine (AdoMet) from methionine and ATP. The overall synthetic reaction is composed of two sequential steps, AdoMet formation and the subsequent tripolyphosphate hydrolysis which occurs prior to release of AdoMet from the enzyme. In Clostridium botulinum (strain Kyoto / Type A2), this protein is S-adenosylmethionine synthase.